The chain runs to 157 residues: Small ribosomal subunit protein uS7 (157 aa).

The protein belongs to the universal ribosomal protein uS7 family. As to quaternary structure, part of the 30S ribosomal subunit. Contacts proteins S9 and S11.

Functionally, one of the primary rRNA binding proteins, it binds directly to 16S rRNA where it nucleates assembly of the head domain of the 30S subunit. Is located at the subunit interface close to the decoding center, probably blocks exit of the E-site tRNA. The polypeptide is Small ribosomal subunit protein uS7 (Opitutus terrae (strain DSM 11246 / JCM 15787 / PB90-1)).